The following is a 192-amino-acid chain: 3-hydroxyanthranilate 3,4-dioxygenase 1 (192 aa).

O2 is bound at residue Arg50. Fe cation is bound by residues His54, Glu60, and His102. Substrate is bound at residue Glu60. Residues Arg106 and Glu116 each coordinate substrate. Positions 131, 134, 168, and 171 each coordinate a divalent metal cation.

This sequence belongs to the 3-HAO family. Requires Fe(2+) as cofactor.

It is found in the cytoplasm. It carries out the reaction 3-hydroxyanthranilate + O2 = (2Z,4Z)-2-amino-3-carboxymuconate 6-semialdehyde. It functions in the pathway cofactor biosynthesis; NAD(+) biosynthesis; quinolinate from L-kynurenine: step 3/3. In terms of biological role, catalyzes the oxidative ring opening of 3-hydroxyanthranilate to 2-amino-3-carboxymuconate semialdehyde, which spontaneously cyclizes to quinolinate. This chain is 3-hydroxyanthranilate 3,4-dioxygenase 1 (bna1-1), found in Aspergillus fumigatus (strain CBS 144.89 / FGSC A1163 / CEA10) (Neosartorya fumigata).